Consider the following 549-residue polypeptide: uncharacterized protein (549 aa).

This is an uncharacterized protein from Methanocaldococcus jannaschii (strain ATCC 43067 / DSM 2661 / JAL-1 / JCM 10045 / NBRC 100440) (Methanococcus jannaschii).